Consider the following 117-residue polypeptide: Heat shock 70 kDa protein 1-like (117 aa).

ATP is bound by residues 72 to 75 and 84 to 87; these read ERAK and GSTR.

The protein belongs to the heat shock protein 70 family. As to quaternary structure, interacts with PRKN. Detected at higher levels in caput epididymal spermatazoa than in cauda epididymal spermatazoa (at protein level).

In terms of biological role, molecular chaperone implicated in a wide variety of cellular processes, including protection of the proteome from stress, folding and transport of newly synthesized polypeptides, activation of proteolysis of misfolded proteins and the formation and dissociation of protein complexes. Plays a pivotal role in the protein quality control system, ensuring the correct folding of proteins, the re-folding of misfolded proteins and controlling the targeting of proteins for subsequent degradation. This is achieved through cycles of ATP binding, ATP hydrolysis and ADP release, mediated by co-chaperones. The affinity for polypeptides is regulated by its nucleotide bound state. In the ATP-bound form, it has a low affinity for substrate proteins. However, upon hydrolysis of the ATP to ADP, it undergoes a conformational change that increases its affinity for substrate proteins. It goes through repeated cycles of ATP hydrolysis and nucleotide exchange, which permits cycles of substrate binding and release. Positive regulator of PRKN translocation to damaged mitochondria. This is Heat shock 70 kDa protein 1-like from Mesocricetus auratus (Golden hamster).